A 253-amino-acid polypeptide reads, in one-letter code: Probable transcriptional regulatory protein RPR_05505 (253 aa).

It belongs to the TACO1 family.

It localises to the cytoplasm. The chain is Probable transcriptional regulatory protein RPR_05505 from Rickettsia peacockii (strain Rustic).